A 244-amino-acid polypeptide reads, in one-letter code: Type III pantothenate kinase (244 aa).

12–19 (VVGNTHVR) provides a ligand contact to ATP. Residues tyrosine 79 and 83–86 (GLDR) each bind substrate. Residue aspartate 85 is the Proton acceptor of the active site. Position 105 (aspartate 105) interacts with K(+). Position 108 (threonine 108) interacts with ATP. Threonine 163 contacts substrate.

This sequence belongs to the type III pantothenate kinase family. As to quaternary structure, homodimer. It depends on NH4(+) as a cofactor. Requires K(+) as cofactor.

Its subcellular location is the cytoplasm. It catalyses the reaction (R)-pantothenate + ATP = (R)-4'-phosphopantothenate + ADP + H(+). It participates in cofactor biosynthesis; coenzyme A biosynthesis; CoA from (R)-pantothenate: step 1/5. Its function is as follows. Catalyzes the phosphorylation of pantothenate (Pan), the first step in CoA biosynthesis. This Synechococcus sp. (strain JA-3-3Ab) (Cyanobacteria bacterium Yellowstone A-Prime) protein is Type III pantothenate kinase.